Consider the following 193-residue polypeptide: Protein PapJ (193 aa).

Residues M1–A27 form the signal peptide.

The protein localises to the periplasm. In terms of biological role, this protein maintains pilus integrity and thus is an important participant in pilus assembly. It may function as molecular chaperone directly or indirectly in the correct assembly of PapA subunits. This Escherichia coli protein is Protein PapJ (papJ).